The primary structure comprises 707 residues: Ferric reduction oxidase 5 (707 aa).

At 1-9 the chain is on the cytoplasmic side; the sequence is MGNMRSLVK. A helical membrane pass occupies residues 10–29; the sequence is MLMVVLFLGWIFVWIMISTN. The Extracellular segment spans residues 30-54; that stretch reads RFQNIWTPKLAKYLKTTYFGPQGMN. The helical transmembrane segment at 55–73 threads the bilayer; that stretch reads LVLLTVPMMFIAVLSCVYL. The Cytoplasmic segment spans residues 74–106; sequence HTQKQPSQTQSLYKCREWKVKGRMGRVMMVMNP. Residues 107 to 130 traverse the membrane as a helical segment; sequence LGIVTATELTFSLLFLALLVWALS. Residues 131–198 are Extracellular-facing; the sequence is NYLYLSYHVH…VGLTSESSIK (68 aa). The Ferric oxidoreductase domain maps to 165–284; it reads GYVGHYCWAF…HLYGLYIVFY (120 aa). The helical transmembrane segment at 199–222 threads the bilayer; that stretch reads YHIWLGHVSNFCFLVHTVVFLIYW. Heme contacts are provided by H200 and H214. The Cytoplasmic portion of the chain corresponds to 223–272; it reads AMVNKLMETFAWNATYVPNLAGTIAMVIGIAIWVTSLPSFRRKKFEIFFY. Residues 273–297 form a helical membrane-spanning segment; that stretch reads THHLYGLYIVFYAIHVGDSWFCMIL. The heme site is built by H274 and H287. Residues 298–319 are Extracellular-facing; the sequence is PNIFLFFIDRYLRFLQSTKRSR. Residues 313-416 enclose the FAD-binding FR-type domain; that stretch reads QSTKRSRLVS…EGPYGPNSFD (104 aa). Residues 320-340 form a helical membrane-spanning segment; sequence LVSAKILPSDNLELTFAKTSG. At 341–533 the chain is on the cytoplasmic side; the sequence is LHYTPTSILF…PISPVLGPNN (193 aa). An FAD-binding site is contributed by 362 to 365; that stretch reads HPFT. 408 to 411 contributes to the NAD(+) binding site; that stretch reads GPYG. A helical membrane pass occupies residues 534–556; that stretch reads FLWLGVVILSSFVMFLLLIGIVT. Residues 557 to 576 are Extracellular-facing; it reads RYYIYPVDHNTGSIYNFTYR. Residues 577–598 traverse the membrane as a helical segment; sequence VLWVMFLGCVCIFISSSIIFLW. Topologically, residues 599 to 707 are cytoplasmic; sequence RKKENKEGDK…LHFEAISFNW (109 aa). Positions 608-630 are disordered; the sequence is KDSKKQVQSVEFQTPTSSPGSWF. The segment covering 613 to 627 has biased composition (polar residues); sequence QVQSVEFQTPTSSPG.

The protein belongs to the ferric reductase (FRE) family. FAD is required as a cofactor. Expressed at low levels in roots, shoots, pedicels and inflorescence stems, flowers, sepals, stigmas and anther filaments.

The protein resides in the cell membrane. The enzyme catalyses 2 a Fe(II)-siderophore + NAD(+) + H(+) = 2 a Fe(III)-siderophore + NADH. In terms of biological role, ferric chelate reductase probably involved in iron reduction in shoots. May participate in the transport of electrons to a Fe(3+) ion via FAD and heme intermediates. May act in iron metabolism in reproductive organs. May function as root surface cupric chelate reductase and participate in the reduction of Cu(2+), for Cu(+) acquisition via Cu(+) transporters in response to copper deficiency. In Arabidopsis thaliana (Mouse-ear cress), this protein is Ferric reduction oxidase 5 (FRO5).